The sequence spans 429 residues: Putative chloride channel protein ClcB-like (429 aa).

Helical transmembrane passes span 1–21 (MLAIAGLIGCAGALATIAFRE), 44–64 (LPWWARLLVPTAGGLLAGLTL), 146–166 (LLVACGAAAGITSAYNAPIAG), 168–188 (VFVCEIVFGAITTATLGPLLV), 200–220 (FFGYGAVYAMPHFDFVSGWEV), 221–241 (LTYLGLGLAAGMAGPLLLGLI), 259–279 (LALGGLIVGALSIRVPEVWGN), 283–303 (VVNGFLHAPWLWQTVALVLVC), 315–335 (GAVGGVFTPTLFCGAALGLLY), 354–376 (AVVGMGALLAATTHAPLMSILMI), and 383–405 (YQVVLPLMLACITGYVTAHATGA).

The protein belongs to the chloride channel (TC 2.A.49) family. ClcB subfamily.

The protein localises to the cell inner membrane. In Ralstonia nicotianae (strain ATCC BAA-1114 / GMI1000) (Ralstonia solanacearum), this protein is Putative chloride channel protein ClcB-like.